The primary structure comprises 293 residues: Acidic endochitinase SE2 (293 aa).

The signal sequence occupies residues 1-25; the sequence is MAAKIVSVLFLISLLIFASFESSHG. One can recognise a GH18 domain in the interval 26–293; that stretch reads SQIVIYWGQN…GYSSAIKSSV (268 aa). 2 cysteine pairs are disulfide-bonded: C45-C91 and C75-C81. E151 functions as the Proton donor in the catalytic mechanism. A disulfide bond links C183 and C212.

The protein belongs to the glycosyl hydrolase 18 family. Chitinase class II subfamily. As to expression, accumulates in leaves during infection.

Its subcellular location is the secreted. It localises to the extracellular space. It carries out the reaction Random endo-hydrolysis of N-acetyl-beta-D-glucosaminide (1-&gt;4)-beta-linkages in chitin and chitodextrins.. In terms of biological role, this protein functions as a defense against chitin containing fungal pathogens. This endochitinase also exhibits exochitinase activity, i.e. it is capable of hydrolyzing chito-oligosaccharides, including chitobiose. This chain is Acidic endochitinase SE2 (SE2), found in Beta vulgaris (Sugar beet).